The chain runs to 328 residues: NADH-quinone oxidoreductase subunit H (328 aa).

8 consecutive transmembrane segments (helical) span residues 10-30 (IIKI…GTYF), 80-100 (IAPV…PFLP), 118-138 (IGIL…LLGG), 155-175 (AVFI…IMMV), 191-211 (ITSW…IAAF), 243-263 (LFFI…SLLF), 272-292 (LLGA…FLWT), and 306-326 (WLCW…TAIV).

This sequence belongs to the complex I subunit 1 family. NDH-1 is composed of 14 different subunits. Subunits NuoA, H, J, K, L, M, N constitute the membrane sector of the complex.

It localises to the cell inner membrane. The catalysed reaction is a quinone + NADH + 5 H(+)(in) = a quinol + NAD(+) + 4 H(+)(out). Functionally, NDH-1 shuttles electrons from NADH, via FMN and iron-sulfur (Fe-S) centers, to quinones in the respiratory chain. The immediate electron acceptor for the enzyme in this species is believed to be ubiquinone. Couples the redox reaction to proton translocation (for every two electrons transferred, four hydrogen ions are translocated across the cytoplasmic membrane), and thus conserves the redox energy in a proton gradient. This subunit may bind ubiquinone. This is NADH-quinone oxidoreductase subunit H from Sulfurimonas denitrificans (strain ATCC 33889 / DSM 1251) (Thiomicrospira denitrificans (strain ATCC 33889 / DSM 1251)).